The chain runs to 142 residues: Large ribosomal subunit protein uL13 (142 aa).

It belongs to the universal ribosomal protein uL13 family. In terms of assembly, part of the 50S ribosomal subunit.

Functionally, this protein is one of the early assembly proteins of the 50S ribosomal subunit, although it is not seen to bind rRNA by itself. It is important during the early stages of 50S assembly. The protein is Large ribosomal subunit protein uL13 of Pseudomonas syringae pv. tomato (strain ATCC BAA-871 / DC3000).